A 210-amino-acid polypeptide reads, in one-letter code: MKKRIQKTILTVLFSSLSSIAFADMQSIAELQRRLEHVAQYSADFEQTVRSSKGQQIQSGRGKFQVKRPNLFRMDINAPQENVIVSDGENLWFYDPFVAQVTVNSVQNAVNGTPFVLLTSSDKQHWTQYEVTQNADTFVLKPKSAKNNLRQFDVQIDQNGLLKGFSTIERDGQTNLYRLRNITTADLSADLFKFSVPKDVEVDDQRRVKK.

The N-terminal stretch at 1–23 (MKKRIQKTILTVLFSSLSSIAFA) is a signal peptide.

It belongs to the LolA family. In terms of assembly, monomer.

The protein resides in the periplasm. In terms of biological role, participates in the translocation of lipoproteins from the inner membrane to the outer membrane. Only forms a complex with a lipoprotein if the residue after the N-terminal Cys is not an aspartate (The Asp acts as a targeting signal to indicate that the lipoprotein should stay in the inner membrane). The polypeptide is Outer-membrane lipoprotein carrier protein (Haemophilus ducreyi (strain 35000HP / ATCC 700724)).